The chain runs to 766 residues: Ent-copalyl diphosphate synthase 3 (766 aa).

A chloroplast-targeting transit peptide spans 1-30 (FRSTAAGRCLPVTCCVFPRHFRVSSSSILP). Substrate is bound at residue Lys-222. Positions 354 and 356 each coordinate Mg(2+). Residues 354 to 357 (DVDD) carry the DXDD motif motif. Lys-440 provides a ligand contact to substrate.

It belongs to the terpene synthase family. Tpsc subfamily. Mg(2+) is required as a cofactor. In terms of tissue distribution, accumulates in leaves, and, at low levels, in germinating seeds.

It is found in the plastid. Its subcellular location is the chloroplast. The enzyme catalyses (2E,6E,10E)-geranylgeranyl diphosphate = ent-copalyl diphosphate. Its pathway is plant hormone biosynthesis; gibberellin biosynthesis. It functions in the pathway secondary metabolite biosynthesis; terpenoid biosynthesis. Involved in the biosynthesis of ent-kaurene diterpenoids natural products such as oridonin, miltiradiene, eriocalyxin B and nezukol, known to exhibit antitumor, anti-inflammatory and antibacterial activities, and in the production of gibberellins phytohormones. Catalyzes the conversion of (2E,6E,10E)-geranylgeranyl diphosphate (GGPP) to ent-copalyl diphosphate (ent-CPP). In Isodon eriocalyx (Plectranthus eriocalyx), this protein is Ent-copalyl diphosphate synthase 3.